We begin with the raw amino-acid sequence, 318 residues long: Ethylene-responsive transcription factor FZP (318 aa).

Over residues Met1 to Ser15 the composition is skewed to low complexity. Disordered regions lie at residues Met1 to Leu59 and Ser158 to Ser178. A compositionally biased stretch (pro residues) spans Pro25–Ser37. A DNA-binding region (AP2/ERF) is located at residues Arg57–Val114. Positions Gly160–His171 are enriched in basic residues.

Belongs to the AP2/ERF transcription factor family. ERF subfamily.

It localises to the nucleus. Required to prevent the formation of axillary meristems within the spikelet meristem and permit the subsequent establishment of floral meristem identity. Mediates the transition from spikelet to floret meristem. Determines the transition from panicle branching to spikelet formation. May specify floral organ identity by regulating the class B genes (Agamous-like genes) MADS6 and MADS17, as well as class E genes MADS1, MADS7 and MADS8 in floral meristem. Possesses transactivation activity. The sequence is that of Ethylene-responsive transcription factor FZP from Oryza sativa subsp. japonica (Rice).